Here is a 367-residue protein sequence, read N- to C-terminus: UDP-N-acetylglucosamine--N-acetylmuramyl-(pentapeptide) pyrophosphoryl-undecaprenol N-acetylglucosamine transferase (367 aa).

Residues 11–13 (TAG), Asn125, Arg163, Ser197, and Gln289 each bind UDP-N-acetyl-alpha-D-glucosamine.

The protein belongs to the glycosyltransferase 28 family. MurG subfamily.

The protein localises to the cell membrane. It catalyses the reaction di-trans,octa-cis-undecaprenyl diphospho-N-acetyl-alpha-D-muramoyl-L-alanyl-D-glutamyl-meso-2,6-diaminopimeloyl-D-alanyl-D-alanine + UDP-N-acetyl-alpha-D-glucosamine = di-trans,octa-cis-undecaprenyl diphospho-[N-acetyl-alpha-D-glucosaminyl-(1-&gt;4)]-N-acetyl-alpha-D-muramoyl-L-alanyl-D-glutamyl-meso-2,6-diaminopimeloyl-D-alanyl-D-alanine + UDP + H(+). Its pathway is cell wall biogenesis; peptidoglycan biosynthesis. In terms of biological role, cell wall formation. Catalyzes the transfer of a GlcNAc subunit on undecaprenyl-pyrophosphoryl-MurNAc-pentapeptide (lipid intermediate I) to form undecaprenyl-pyrophosphoryl-MurNAc-(pentapeptide)GlcNAc (lipid intermediate II). In Clavibacter michiganensis subsp. michiganensis (strain NCPPB 382), this protein is UDP-N-acetylglucosamine--N-acetylmuramyl-(pentapeptide) pyrophosphoryl-undecaprenol N-acetylglucosamine transferase.